We begin with the raw amino-acid sequence, 493 residues long: UDP-N-acetylmuramoyl-L-alanyl-D-glutamate--2,6-diaminopimelate ligase (493 aa).

Serine 31 is a UDP-N-acetyl-alpha-D-muramoyl-L-alanyl-D-glutamate binding site. 111 to 117 (GTNGKTT) is a binding site for ATP. Residues asparagine 152, 153–154 (TT), serine 180, and arginine 188 each bind UDP-N-acetyl-alpha-D-muramoyl-L-alanyl-D-glutamate. Position 220 is an N6-carboxylysine (lysine 220). Residues arginine 386, 410–413 (DNPR), glycine 462, and glutamate 466 contribute to the meso-2,6-diaminopimelate site. Positions 410 to 413 (DNPR) match the Meso-diaminopimelate recognition motif motif.

Belongs to the MurCDEF family. MurE subfamily. The cofactor is Mg(2+). Post-translationally, carboxylation is probably crucial for Mg(2+) binding and, consequently, for the gamma-phosphate positioning of ATP.

It localises to the cytoplasm. It catalyses the reaction UDP-N-acetyl-alpha-D-muramoyl-L-alanyl-D-glutamate + meso-2,6-diaminopimelate + ATP = UDP-N-acetyl-alpha-D-muramoyl-L-alanyl-gamma-D-glutamyl-meso-2,6-diaminopimelate + ADP + phosphate + H(+). It participates in cell wall biogenesis; peptidoglycan biosynthesis. Catalyzes the addition of meso-diaminopimelic acid to the nucleotide precursor UDP-N-acetylmuramoyl-L-alanyl-D-glutamate (UMAG) in the biosynthesis of bacterial cell-wall peptidoglycan. The protein is UDP-N-acetylmuramoyl-L-alanyl-D-glutamate--2,6-diaminopimelate ligase (murE1) of Oceanobacillus iheyensis (strain DSM 14371 / CIP 107618 / JCM 11309 / KCTC 3954 / HTE831).